A 1298-amino-acid polypeptide reads, in one-letter code: Histone-lysine N-methyltransferase EHMT1 (1298 aa).

Disordered regions lie at residues 1-111 (MAAA…HVTA) and 144-192 (ASSL…RKLP). Ala-2 bears the N-acetylalanine mark. A Glycyl lysine isopeptide (Lys-Gly) (interchain with G-Cter in SUMO1); alternate cross-link involves residue Lys-22. Lys-22 participates in a covalent cross-link: Glycyl lysine isopeptide (Lys-Gly) (interchain with G-Cter in SUMO2); alternate. Residues 38–50 (SAEKQAGEAHMAA) show a composition bias toward basic and acidic residues. Composition is skewed to polar residues over residues 54-67 (TNGS…SSHA) and 76-89 (SARV…NTLT). Residues 96–105 (VSERDSEAAK) show a composition bias toward basic and acidic residues. Residues Lys-190, Lys-199, Lys-231, Lys-234, Lys-317, and Lys-327 each participate in a glycyl lysine isopeptide (Lys-Gly) (interchain with G-Cter in SUMO2) cross-link. The tract at residues 211–234 (VVGLHAASKDPREVREARDHKEPK) is disordered. The span at 217-234 (ASKDPREVREARDHKEPK) shows a compositional bias: basic and acidic residues. The segment at 339–479 (VNGESLEMDS…QTAPGDSTGY (141 aa)) is disordered. Residues 344–360 (LEMDSDEDDSEELEEDD) show a composition bias toward acidic residues. The span at 373–393 (EDSRTSKESMSEADRAQKMDG) shows a compositional bias: basic and acidic residues. Residues 394 to 416 (ESEEEQESVDTGEEEEGGDESDL) are compositionally biased toward acidic residues. Lys-432 is covalently cross-linked (Glycyl lysine isopeptide (Lys-Gly) (interchain with G-Cter in SUMO2)). The residue at position 435 (Ser-435) is a Phosphoserine. Residues 440–452 (PARKRRRRSRKKP) are compositionally biased toward basic residues. Over residues 460–474 (SYKSSAGSAEQTAPG) the composition is skewed to polar residues. Residue Ser-483 is modified to Phosphoserine. Residues Lys-492, Lys-559, Lys-644, Lys-659, Lys-684, and Lys-731 each participate in a glycyl lysine isopeptide (Lys-Gly) (interchain with G-Cter in SUMO2) cross-link. The segment at 644–717 (KADTTSTVTP…TPGLSQGPGK (74 aa)) is disordered. ANK repeat units lie at residues 737–766 (FHPK…DPNF), 772–801 (NKRS…NIDT), 805–834 (DQRT…LVDP), 838–868 (EGST…DVNC), 872–901 (GGWT…DINI), 905–934 (EENI…DLHA), 938–967 (HGDS…DVTL), and 971–1004 (EGET…DRPS). A histone H3K9me binding region spans residues 905–907 (EEN). Ser-1004 and Ser-1048 each carry phosphoserine. The Pre-SET domain maps to 1060 to 1123 (QYCVCIDDCS…NCRNRVVQNG (64 aa)). Residues Cys-1062, Cys-1064, Cys-1068, Cys-1073, Cys-1075, Cys-1105, Cys-1109, Cys-1111, and Cys-1115 each coordinate Zn(2+). The SET domain occupies 1126–1243 (ARLQLYRTRD…AGEQLGFDYG (118 aa)). S-adenosyl-L-methionine contacts are provided by residues 1136–1138 (MGW), Tyr-1173, and 1200–1201 (NH). The tract at residues 1162–1181 (DSEADVREEDSYLFDLDNKD) is interaction with histone H3. Position 1203 (Cys-1203) interacts with Zn(2+). The interaction with histone H3 stretch occupies residues 1242–1245 (YGER). Residue Cys-1256 participates in Zn(2+) binding. Arg-1257 is an S-adenosyl-L-methionine binding site. Residues Cys-1258 and Cys-1263 each contribute to the Zn(2+) site. Residues 1274–1298 (QASAAQEAQEDGLPDTSSAAAADPL) are disordered.

It belongs to the class V-like SAM-binding methyltransferase superfamily. In terms of assembly, heterodimer; heterodimerizes with EHMT2. Interacts with WIZ and EHMT2. Part of the E2F6.com-1 complex in G0 phase composed of E2F6, MGA, MAX, TFDP1, CBX3, BAT8, EHMT1, RING1, RNF2, MBLR, L3MBTL2 and YAF2. Interacts (via ANK repeats) with RELA (when monomethylated at 'Lys-310'). Interacts with MPHOSPH8. Interacts with CDYL. Interacts with REST only in the presence of CDYL. Part of a complex containing at least CDYL, REST, WIZ, SETB1, EHMT1 and EHMT2. Interacts with BAZ2B. In terms of tissue distribution, widely expressed.

It localises to the nucleus. Its subcellular location is the chromosome. It carries out the reaction N(6)-methyl-L-lysyl(9)-[histone H3] + S-adenosyl-L-methionine = N(6),N(6)-dimethyl-L-lysyl(9)-[histone H3] + S-adenosyl-L-homocysteine + H(+). It catalyses the reaction L-lysyl(9)-[histone H3] + S-adenosyl-L-methionine = N(6)-methyl-L-lysyl(9)-[histone H3] + S-adenosyl-L-homocysteine + H(+). Methyltransferase activity is inhibited by BIX-01294. Efficiently inhibited by compound E72, a BIX-01294 derivative in which the diazepane ring and the benzyl are replaced with a 3-dimethylaminopropyl and a 5-aminopentyl group at sites B and C, respectively. In terms of biological role, histone methyltransferase that specifically mono- and dimethylates 'Lys-9' of histone H3 (H3K9me1 and H3K9me2, respectively) in euchromatin. H3K9me represents a specific tag for epigenetic transcriptional repression by recruiting HP1 proteins to methylated histones. Also weakly methylates 'Lys-27' of histone H3 (H3K27me). Also required for DNA methylation, the histone methyltransferase activity is not required for DNA methylation, suggesting that these 2 activities function independently. Probably targeted to histone H3 by different DNA-binding proteins like E2F6, MGA, MAX and/or DP1. During G0 phase, it probably contributes to silencing of MYC- and E2F-responsive genes, suggesting a role in G0/G1 transition in cell cycle. In addition to the histone methyltransferase activity, also methylates non-histone proteins: mediates dimethylation of 'Lys-373' of p53/TP53. Represses the expression of mitochondrial function-related genes, perhaps by occupying their promoter regions, working in concert with probable chromatin reader BAZ2B. The chain is Histone-lysine N-methyltransferase EHMT1 (EHMT1) from Homo sapiens (Human).